The following is a 297-amino-acid chain: Protoheme IX farnesyltransferase 1 (297 aa).

The next 9 membrane-spanning stretches (helical) occupy residues 23–43 (VVVL…RAGV), 45–65 (WSVL…AAVV), 93–113 (LPAL…LLAF), 117–137 (LTAW…TGFL), 145–165 (IVIG…AVSG), 171–191 (PLLL…ALAI), 216–236 (LHIL…YAIH), 241–261 (LYLA…WVLY), and 277–297 (IAYL…LLNL).

It belongs to the UbiA prenyltransferase family. Protoheme IX farnesyltransferase subfamily.

It is found in the cell inner membrane. It carries out the reaction heme b + (2E,6E)-farnesyl diphosphate + H2O = Fe(II)-heme o + diphosphate. It participates in porphyrin-containing compound metabolism; heme O biosynthesis; heme O from protoheme: step 1/1. Its function is as follows. Converts heme B (protoheme IX) to heme O by substitution of the vinyl group on carbon 2 of heme B porphyrin ring with a hydroxyethyl farnesyl side group. The sequence is that of Protoheme IX farnesyltransferase 1 from Pseudomonas putida (strain GB-1).